A 102-amino-acid polypeptide reads, in one-letter code: Glutaredoxin-C14 (102 aa).

The region spanning 1-101 (MDKVMRMSSE…PLIKPYQSFH (101 aa)) is the Glutaredoxin domain. Residues Cys21 and Cys24 are joined by a disulfide bond.

The protein belongs to the glutaredoxin family. CC-type subfamily.

It is found in the cytoplasm. Functionally, has a glutathione-disulfide oxidoreductase activity in the presence of NADPH and glutathione reductase. Reduces low molecular weight disulfides and proteins. The chain is Glutaredoxin-C14 (GRXC14) from Arabidopsis thaliana (Mouse-ear cress).